The following is a 511-amino-acid chain: GMP synthase [glutamine-hydrolyzing] (511 aa).

The region spanning 3–193 (KILILDFGGQ…VYSICDVAGD (191 aa)) is the Glutamine amidotransferase type-1 domain. The Nucleophile role is filled by C80. Catalysis depends on residues H167 and E169. The 191-residue stretch at 194 to 384 (WEPKNIKLEK…LDIPYQNVYR (191 aa)) folds into the GMPS ATP-PPase domain. An ATP-binding site is contributed by 221–227 (SGGVDSL).

Homodimer.

The catalysed reaction is XMP + L-glutamine + ATP + H2O = GMP + L-glutamate + AMP + diphosphate + 2 H(+). The protein operates within purine metabolism; GMP biosynthesis; GMP from XMP (L-Gln route): step 1/1. Catalyzes the synthesis of GMP from XMP. The protein is GMP synthase [glutamine-hydrolyzing] of Malacoplasma penetrans (strain HF-2) (Mycoplasma penetrans).